A 98-amino-acid polypeptide reads, in one-letter code: Small ribosomal subunit protein uS19 (98 aa).

The disordered stretch occupies residues 77–98 (TRTYRGHAGGKAEKGGAAPKRK).

It belongs to the universal ribosomal protein uS19 family.

Protein S19 forms a complex with S13 that binds strongly to the 16S ribosomal RNA. This Chlorobium phaeovibrioides (strain DSM 265 / 1930) (Prosthecochloris vibrioformis (strain DSM 265)) protein is Small ribosomal subunit protein uS19.